The primary structure comprises 325 residues: NADH-quinone oxidoreductase subunit H (325 aa).

8 helical membrane-spanning segments follow: residues valine 11–phenylalanine 31, valine 81–valine 101, isoleucine 114–glycine 134, leucine 154–phenylalanine 174, leucine 186–valine 206, phenylalanine 237–phenylalanine 257, leucine 265–isoleucine 285, and valine 304–alanine 324.

It belongs to the complex I subunit 1 family. NDH-1 is composed of 13 different subunits. Subunits NuoA, H, J, K, L, M, N constitute the membrane sector of the complex.

The protein localises to the cell inner membrane. The catalysed reaction is a quinone + NADH + 5 H(+)(in) = a quinol + NAD(+) + 4 H(+)(out). NDH-1 shuttles electrons from NADH, via FMN and iron-sulfur (Fe-S) centers, to quinones in the respiratory chain. The immediate electron acceptor for the enzyme in this species is believed to be ubiquinone. Couples the redox reaction to proton translocation (for every two electrons transferred, four hydrogen ions are translocated across the cytoplasmic membrane), and thus conserves the redox energy in a proton gradient. This subunit may bind ubiquinone. This Erwinia tasmaniensis (strain DSM 17950 / CFBP 7177 / CIP 109463 / NCPPB 4357 / Et1/99) protein is NADH-quinone oxidoreductase subunit H.